A 271-amino-acid polypeptide reads, in one-letter code: ATP synthase subunit delta (271 aa).

This sequence belongs to the ATPase delta chain family. As to quaternary structure, F-type ATPases have 2 components, F(1) - the catalytic core - and F(0) - the membrane proton channel. F(1) has five subunits: alpha(3), beta(3), gamma(1), delta(1), epsilon(1). F(0) has three main subunits: a(1), b(2) and c(10-14). The alpha and beta chains form an alternating ring which encloses part of the gamma chain. F(1) is attached to F(0) by a central stalk formed by the gamma and epsilon chains, while a peripheral stalk is formed by the delta and b chains.

Its subcellular location is the cell membrane. Functionally, f(1)F(0) ATP synthase produces ATP from ADP in the presence of a proton or sodium gradient. F-type ATPases consist of two structural domains, F(1) containing the extramembraneous catalytic core and F(0) containing the membrane proton channel, linked together by a central stalk and a peripheral stalk. During catalysis, ATP synthesis in the catalytic domain of F(1) is coupled via a rotary mechanism of the central stalk subunits to proton translocation. Its function is as follows. This protein is part of the stalk that links CF(0) to CF(1). It either transmits conformational changes from CF(0) to CF(1) or is implicated in proton conduction. This chain is ATP synthase subunit delta, found in Streptomyces griseus subsp. griseus (strain JCM 4626 / CBS 651.72 / NBRC 13350 / KCC S-0626 / ISP 5235).